A 276-amino-acid chain; its full sequence is Undecaprenyl-diphosphatase 2 (276 aa).

8 helical membrane passes run 1–21 (MSLWFLVFLSVLQGVTELFPV), 44–64 (QLLPFLVALHLGTALALLWYF), 87–107 (GHLMWALIIGTIPTGIVGLLL), 114–134 (VFHDLRIVAVALIINGVLLWV), 150–170 (MTFKQAFFVGLAQIGALIPGF), 190–210 (AAEFSFLLGTPIIFAAGVLEL), 220–240 (LMDALLGGVLTAIAAYLSVRF), and 251–271 (LASFGVYCVIAGVFFLGWFML).

This sequence belongs to the UppP family.

It is found in the cell inner membrane. The enzyme catalyses di-trans,octa-cis-undecaprenyl diphosphate + H2O = di-trans,octa-cis-undecaprenyl phosphate + phosphate + H(+). In terms of biological role, catalyzes the dephosphorylation of undecaprenyl diphosphate (UPP). Confers resistance to bacitracin. In Burkholderia ambifaria (strain ATCC BAA-244 / DSM 16087 / CCUG 44356 / LMG 19182 / AMMD) (Burkholderia cepacia (strain AMMD)), this protein is Undecaprenyl-diphosphatase 2.